The chain runs to 175 residues: Small ribosomal subunit protein uS7 (175 aa).

Belongs to the universal ribosomal protein uS7 family. As to quaternary structure, part of the 30S ribosomal subunit. Contacts proteins S9 and S11.

In terms of biological role, one of the primary rRNA binding proteins, it binds directly to 16S rRNA where it nucleates assembly of the head domain of the 30S subunit. Is located at the subunit interface close to the decoding center, probably blocks exit of the E-site tRNA. The sequence is that of Small ribosomal subunit protein uS7 from Legionella pneumophila (strain Paris).